The primary structure comprises 346 residues: DNA primase small subunit PriS (346 aa).

Catalysis depends on residues Asp97, Asp99, and Asp280.

The protein belongs to the eukaryotic-type primase small subunit family. Heterodimer of a small subunit (PriS) and a large subunit (PriL). Mg(2+) serves as cofactor. Mn(2+) is required as a cofactor.

Catalytic subunit of DNA primase, an RNA polymerase that catalyzes the synthesis of short RNA molecules used as primers for DNA polymerase during DNA replication. The small subunit contains the primase catalytic core and has DNA synthesis activity on its own. Binding to the large subunit stabilizes and modulates the activity, increasing the rate of DNA synthesis while decreasing the length of the DNA fragments, and conferring RNA synthesis capability. The DNA polymerase activity may enable DNA primase to also catalyze primer extension after primer synthesis. May also play a role in DNA repair. The chain is DNA primase small subunit PriS from Thermococcus kodakarensis (strain ATCC BAA-918 / JCM 12380 / KOD1) (Pyrococcus kodakaraensis (strain KOD1)).